The chain runs to 187 residues: Ribosome-recycling factor (187 aa).

Residues leucine 141 to glycine 169 form a disordered region.

This sequence belongs to the RRF family.

The protein resides in the cytoplasm. Its function is as follows. Responsible for the release of ribosomes from messenger RNA at the termination of protein biosynthesis. May increase the efficiency of translation by recycling ribosomes from one round of translation to another. The sequence is that of Ribosome-recycling factor from Limosilactobacillus reuteri (strain DSM 20016) (Lactobacillus reuteri).